Consider the following 556-residue polypeptide: Protein misato homolog 1 (556 aa).

Serine 41 carries the post-translational modification Phosphoserine.

It belongs to the misato family.

The protein resides in the mitochondrion outer membrane. It is found in the cytoplasm. In terms of biological role, involved in the regulation of mitochondrial distribution and morphology. Required for mitochondrial fusion and mitochondrial network formation. This chain is Protein misato homolog 1 (Msto1), found in Mus musculus (Mouse).